The following is a 235-amino-acid chain: Phosphoribosylaminoimidazole-succinocarboxamide synthase (235 aa).

The protein belongs to the SAICAR synthetase family.

The enzyme catalyses 5-amino-1-(5-phospho-D-ribosyl)imidazole-4-carboxylate + L-aspartate + ATP = (2S)-2-[5-amino-1-(5-phospho-beta-D-ribosyl)imidazole-4-carboxamido]succinate + ADP + phosphate + 2 H(+). The protein operates within purine metabolism; IMP biosynthesis via de novo pathway; 5-amino-1-(5-phospho-D-ribosyl)imidazole-4-carboxamide from 5-amino-1-(5-phospho-D-ribosyl)imidazole-4-carboxylate: step 1/2. The chain is Phosphoribosylaminoimidazole-succinocarboxamide synthase from Clostridium botulinum (strain Alaska E43 / Type E3).